Consider the following 451-residue polypeptide: Macrophage scavenger receptor types I and II (451 aa).

Residues 1–50 (MEQWDHFHNQQEDTDSCSESVKFDARSMTALLPPNPKNSPSLQEKLKSFK) are Cytoplasmic-facing. S27 is modified (phosphoserine). The chain crosses the membrane as a helical; Signal-anchor for type II membrane protein span at residues 51-76 (AALIALYLLVFAVLIPLIGIVAAQLL). Residues 77–109 (KWETKNCSVSSTNANDITQSLTGKGNDSEEEMR) are spacer. Residues 77-451 (KWETKNCSVS…SEDAGVTCTL (375 aa)) are Extracellular-facing. N82, N102, N143, N184, N221, N249, and N267 each carry an N-linked (GlcNAc...) asparagine glycan. Positions 171 to 255 (NAIDEISKSL…VLNNITNDLR (85 aa)) form a coiled coil. The tract at residues 267–346 (NITLIQGPPG…EKGSGNTLTP (80 aa)) is disordered. One can recognise a Collagen-like domain in the interval 273-341 (GPPGPPGEKG…KGQKGEKGSG (69 aa)). Positions 350 to 450 (VRLVGGSGPH…HSEDAGVTCT (101 aa)) constitute an SRCR domain. Disulfide bonds link C375–C439, C388–C449, and C419–C429.

Homotrimer. Interacts with MYO18A. In terms of tissue distribution, isoform I, isoform II and isoform III are expressed in monocyte-derived macrophages. Isoform I and isoform II are expressed in the liver, placenta and brain.

The protein localises to the membrane. Functionally, membrane glycoproteins implicated in the pathologic deposition of cholesterol in arterial walls during atherogenesis. Two types of receptor subunits exist. These receptors mediate the endocytosis of a diverse group of macromolecules, including modified low density lipoproteins (LDL). Isoform III does not internalize acetylated LDL. The polypeptide is Macrophage scavenger receptor types I and II (MSR1) (Homo sapiens (Human)).